The primary structure comprises 237 residues: BTB/POZ domain-containing protein KCTD6 (237 aa).

Residues 12–81 (HPVTLNVGGH…LRTSELTLPV (70 aa)) form the BTB domain.

As to quaternary structure, homopentamer. May be part of a cullin-containing E3 ubiquitin-protein ligase complex.

It functions in the pathway protein modification; protein ubiquitination. Probable substrate-specific adapter of a cullin-containing E3 ubiquitin-protein ligase complex mediating the ubiquitination and subsequent proteasomal degradation of target proteins. The chain is BTB/POZ domain-containing protein KCTD6 (kctd6) from Danio rerio (Zebrafish).